Reading from the N-terminus, the 1024-residue chain is RNA cytidine acetyltransferase (1024 aa).

287–296 contributes to the ATP binding site; it reads GRGKSAALGL. K426 is subject to N6-acetyllysine. Position 470 (R470) interacts with ATP. In terms of domain architecture, N-acetyltransferase spans 558–753; that stretch reads CLLPPVPPTQ…HSCIMLKTLA (196 aa). Residues 629–631 and 636–642 contribute to the acetyl-CoA site; these read IAV and QGMGYGS. The required for localization to the nucleolus and midbody stretch occupies residues 702–1024; sequence PAERLDYLGV…RKDMKLKRKK (323 aa). T716 is subject to Phosphothreonine. R725 is an acetyl-CoA binding site. Phosphoserine is present on residues S934, S984, and S987. The interval 990-1024 is disordered; sequence SDKKRKLETKQEPKQSKKLKKRDNNRKDMKLKRKK. Basic residues predominate over residues 1005-1024; it reads SKKLKKRDNNRKDMKLKRKK.

This sequence belongs to the RNA cytidine acetyltransferase family. NAT10 subfamily. As to quaternary structure, part of the small subunit (SSU) processome, composed of more than 70 proteins and the RNA chaperone small nucleolar RNA (snoRNA) U3. Interacts with THUMPD1. Interacts with SUN1 (via N-terminus). Interacts with TERT.

It is found in the nucleus. It localises to the nucleolus. It carries out the reaction a cytidine in 18S rRNA + acetyl-CoA + ATP + H2O = an N(4)-acetylcytidine in 18S rRNA + ADP + phosphate + CoA + H(+). The catalysed reaction is a cytidine in tRNA + acetyl-CoA + ATP + H2O = an N(4)-acetylcytidine in tRNA + ADP + phosphate + CoA + H(+). It catalyses the reaction a cytidine in mRNA + acetyl-CoA + ATP + H2O = an N(4)-acetylcytidine in mRNA + ADP + phosphate + CoA + H(+). Functionally, RNA cytidine acetyltransferase that catalyzes the formation of N(4)-acetylcytidine (ac4C) modification on mRNAs, 18S rRNA and tRNAs. Catalyzes ac4C modification of a broad range of mRNAs, enhancing mRNA stability and translation. mRNA ac4C modification is frequently present within wobble cytidine sites and promotes translation efficiency. Mediates the formation of ac4C at position 1842 in 18S rRNA. May also catalyze the formation of ac4C at position 1337 in 18S rRNA. Required for early nucleolar cleavages of precursor rRNA at sites A0, A1 and A2 during 18S rRNA synthesis. Catalyzes the formation of ac4C in serine and leucine tRNAs. Requires the tRNA-binding adapter protein THUMPD1 for full tRNA acetyltransferase activity but not for 18S rRNA acetylation. In addition to RNA acetyltransferase activity, also able to acetylate lysine residues of proteins, such as histones, microtubules, p53/TP53 and MDM2, in vitro. The relevance of the protein lysine acetyltransferase activity is however unsure in vivo. Activates telomerase activity by stimulating the transcription of TERT, and may also regulate telomerase function by affecting the balance of telomerase subunit assembly, disassembly, and localization. Involved in the regulation of centrosome duplication by acetylating CENATAC during mitosis, promoting SASS6 proteasome degradation. Part of the small subunit (SSU) processome, first precursor of the small eukaryotic ribosomal subunit. During the assembly of the SSU processome in the nucleolus, many ribosome biogenesis factors, an RNA chaperone and ribosomal proteins associate with the nascent pre-rRNA and work in concert to generate RNA folding, modifications, rearrangements and cleavage as well as targeted degradation of pre-ribosomal RNA by the RNA exosome. The chain is RNA cytidine acetyltransferase from Mus musculus (Mouse).